The following is a 260-amino-acid chain: 3'-5' ssDNA/RNA exonuclease TatD (260 aa).

A divalent metal cation contacts are provided by glutamate 91, histidine 127, and histidine 152.

This sequence belongs to the metallo-dependent hydrolases superfamily. TatD-type hydrolase family. TatD subfamily. Monomer. Requires Mg(2+) as cofactor.

The protein localises to the cytoplasm. 3'-5' exonuclease that prefers single-stranded DNA and RNA. May play a role in the H(2)O(2)-induced DNA damage repair. This chain is 3'-5' ssDNA/RNA exonuclease TatD, found in Enterobacter sp. (strain 638).